A 625-amino-acid chain; its full sequence is MNAAVVRRTQEALGKVIRRPPLTEKLLNKPPFRYLHDIITEVIRITGFMKGLYTDAEMKSENVKDKDAKISFLQKAIDVVMMVSGEPLAAKPARIVAGHEPERTNELLQLIGKCCLSKLSSDEAVKRVLAGDKGDSRGRAQRTSKAQEPNNKSGKEEESRIHKEDKRSSEAKERSASAEHKQKEELKEDSKPREKERDKEKAKEADRDRHRDPDRDRNRDGEREKARARAKDRDRNNRDRDREAERDRERDRRSEGGKEKERVKDRDRDRDKGRDRERRKSKNGEHTRDPDREKSRDADKPEKKSSSSGEISRKLSDGSFKDVKAEMEADISVGASRSSTLKPSKRRSKHSLEGDSPSDAEVEAGPAGQDKPEVMENAEVPSELPSSLRRIPRPGSARPAPPRVKRQESTETLVVDRSGSGKTVSSVIIDSQNSDNEDDEQFVVEAAPQLSEIADIDMVPSGELEDEEKHGGLVKKILETKKDYEKLQQSLKPGEKERSLIFESAWKKEKDIVSKEIEKLRVSIQTLCKSALPLGKIMDYIQEDVDAMQNELQLWHSENRQHAEALSQEQSITDSAVEPLKAELSELEQQIRDQQDKICAVKANILKNEEKIQKMVHSINLSSRR.

The interval 1–322 is abolishes microtubules binding when missing; it reads MNAAVVRRTQ…RKLSDGSFKD (322 aa). Positions 130–439 are disordered; the sequence is AGDKGDSRGR…DSQNSDNEDD (310 aa). The span at 141-152 shows a compositional bias: polar residues; sequence QRTSKAQEPNNK. Positions 153–327 are enriched in basic and acidic residues; it reads SGKEEESRIH…GSFKDVKAEM (175 aa). Positions 229 to 625 are DISC1-interaction domain; the sequence is RAKDRDRNNR…VHSINLSSRR (397 aa). Phosphoserine occurs at positions 316 and 409. The segment covering 420-434 has biased composition (polar residues); it reads SGKTVSSVIIDSQNS. A coiled-coil region spans residues 472-600; the sequence is GLVKKILETK…IRDQQDKICA (129 aa).

Belongs to the TRAF3IP1 family. As to quaternary structure, interacts with IL13RA1. Binds to microtubules, TRAF3 and DISC1. Component of the IFT complex B, at least composed of IFT20, IFT22, IFT25, IFT27, IFT46, IFT52, TRAF3IP1/IFT54, IFT57, IFT74, IFT80, IFT81, and IFT88. Interacts with IFT88. Interacts with MAP4.

Its subcellular location is the cytoplasm. It localises to the cytoskeleton. It is found in the cell projection. The protein localises to the cilium. The protein resides in the cilium axoneme. Its subcellular location is the cilium basal body. In terms of biological role, plays an inhibitory role on IL13 signaling by binding to IL13RA1. Involved in suppression of IL13-induced STAT6 phosphorylation, transcriptional activity and DNA-binding. Recruits TRAF3 and DISC1 to the microtubules. Involved in epithelial morphogenesis and in the regulation of microtubule cytoskeleton organization. Is a negative regulator of microtubule stability, acting through the control of MAP4 levels. Involved in ciliogenesis. The protein is TRAF3-interacting protein 1 (Traf3ip1) of Mus musculus (Mouse).